A 186-amino-acid polypeptide reads, in one-letter code: Proline-rich protein 3 (186 aa).

Positions 1–97 (MPKRKKQNQP…LGPRSSPYGR (97 aa)) are disordered. 2 stretches are compositionally biased toward pro residues: residues 33-44 (MGPPSLLGPPPM) and 67-79 (MIPP…PPPR). The segment at 153–181 (KSDRPVCRHFSKKGHCRYEDHCAFYHPGV) adopts a C3H1-type zinc-finger fold.

This Rattus norvegicus (Rat) protein is Proline-rich protein 3 (Prr3).